Reading from the N-terminus, the 206-residue chain is Small ribosomal subunit protein uS4 (206 aa).

The S4 RNA-binding domain occupies R96 to D157.

Belongs to the universal ribosomal protein uS4 family. Part of the 30S ribosomal subunit. Contacts protein S5. The interaction surface between S4 and S5 is involved in control of translational fidelity.

In terms of biological role, one of the primary rRNA binding proteins, it binds directly to 16S rRNA where it nucleates assembly of the body of the 30S subunit. Its function is as follows. With S5 and S12 plays an important role in translational accuracy. This is Small ribosomal subunit protein uS4 from Thioalkalivibrio sulfidiphilus (strain HL-EbGR7).